Here is a 243-residue protein sequence, read N- to C-terminus: Peptidyl-tRNA hydrolase (243 aa).

A tRNA-binding site is contributed by Tyr-14. Residue His-19 is the Proton acceptor of the active site. 3 residues coordinate tRNA: Phe-64, Asn-66, and Asn-112. Residues Ala-184–Gly-225 form a disordered region. Residues Pro-189 to Ala-206 show a composition bias toward basic and acidic residues.

Belongs to the PTH family. Monomer.

It localises to the cytoplasm. It carries out the reaction an N-acyl-L-alpha-aminoacyl-tRNA + H2O = an N-acyl-L-amino acid + a tRNA + H(+). Hydrolyzes ribosome-free peptidyl-tRNAs (with 1 or more amino acids incorporated), which drop off the ribosome during protein synthesis, or as a result of ribosome stalling. In terms of biological role, catalyzes the release of premature peptidyl moieties from peptidyl-tRNA molecules trapped in stalled 50S ribosomal subunits, and thus maintains levels of free tRNAs and 50S ribosomes. This is Peptidyl-tRNA hydrolase from Rhodospirillum rubrum (strain ATCC 11170 / ATH 1.1.1 / DSM 467 / LMG 4362 / NCIMB 8255 / S1).